A 442-amino-acid polypeptide reads, in one-letter code: Coiled-coil domain-containing protein 91 (442 aa).

Positions 1-16 are GGA1-binding motif; the sequence is MDDDDFGGFEAAETFD. The disordered stretch occupies residues 1-27; sequence MDDDDFGGFEAAETFDGEQGGNQAVSP. 2 positions are modified to phosphoserine: Ser43 and Ser46. Disordered stretches follow at residues 48-80 and 114-134; these read ELIL…ADSS and HGAL…SNSQ. Coiled-coil stretches lie at residues 130-210, 253-318, and 346-408; these read VSNS…GHEA, HAQH…MKDV, and ARDQ…RRLD. A homodimerization region spans residues 211 to 414; it reads LSIIVDEYKA…RRLDQVTRQR (204 aa).

As to quaternary structure, homodimer. Interacts with GGA1, GGA2 and AP1G1.

The protein localises to the membrane. The protein resides in the golgi apparatus. It localises to the trans-Golgi network membrane. Its subcellular location is the trans-Golgi network. Functionally, involved in the regulation of membrane traffic through the trans-Golgi network (TGN). Functions in close cooperation with the GGAs in the sorting of hydrolases to lysosomes. The chain is Coiled-coil domain-containing protein 91 (Ccdc91) from Mus musculus (Mouse).